A 143-amino-acid chain; its full sequence is Large ribosomal subunit protein uL16 (143 aa).

It belongs to the universal ribosomal protein uL16 family. Part of the 50S ribosomal subunit.

Binds 23S rRNA and is also seen to make contacts with the A and possibly P site tRNAs. This is Large ribosomal subunit protein uL16 from Tropheryma whipplei (strain TW08/27) (Whipple's bacillus).